Here is a 419-residue protein sequence, read N- to C-terminus: UDP-N-acetylglucosamine 1-carboxyvinyltransferase (419 aa).

Position 22–23 (22–23 (KN)) interacts with phosphoenolpyruvate. Arg-95 contributes to the UDP-N-acetyl-alpha-D-glucosamine binding site. Cys-119 acts as the Proton donor in catalysis. 2-(S-cysteinyl)pyruvic acid O-phosphothioketal is present on Cys-119. UDP-N-acetyl-alpha-D-glucosamine-binding positions include 164-167 (KVSV), Asp-308, and Ile-330.

The protein belongs to the EPSP synthase family. MurA subfamily.

It is found in the cytoplasm. It carries out the reaction phosphoenolpyruvate + UDP-N-acetyl-alpha-D-glucosamine = UDP-N-acetyl-3-O-(1-carboxyvinyl)-alpha-D-glucosamine + phosphate. It functions in the pathway cell wall biogenesis; peptidoglycan biosynthesis. Cell wall formation. Adds enolpyruvyl to UDP-N-acetylglucosamine. This Rickettsia rickettsii (strain Iowa) protein is UDP-N-acetylglucosamine 1-carboxyvinyltransferase.